The following is a 356-amino-acid chain: MSL complex subunit 3B (356 aa).

Residues 2–350 form the MRG domain; that stretch reads EERTVTLEIP…SEVHYSTRNP (349 aa). 2 disordered regions span residues 135-210 and 225-247; these read TNRS…WQQD and KTPV…SPVF. The segment covering 142–156 has biased composition (low complexity); the sequence is LSPSLRLLNPSRPQS. Polar residues-rich tracts occupy residues 178–189 and 229–243; these read AVQSLRRSSPHT and HSRS…SQEG.

It is found in the nucleus. Its function is as follows. Probable non-catalytic component of the MSL histone acetyltransferase complex, a multiprotein complex that mediates the majority of histone H4 acetylation at 'Lys-16' (H4K16ac), an epigenetic mark that prevents chromatin compaction. The sequence is that of MSL complex subunit 3B from Homo sapiens (Human).